Here is a 332-residue protein sequence, read N- to C-terminus: 2-oxoglutarate-dependent dioxygenase ecdK (332 aa).

The Fe2OG dioxygenase domain maps to 178 to 294 (HASELRLNHY…RRSVAFFLKP (117 aa)). 3 residues coordinate Fe cation: H206, D208, and H266. Residue R285 participates in 2-oxoglutarate binding.

The protein belongs to the iron/ascorbate-dependent oxidoreductase family. Fe(2+) is required as a cofactor.

Its pathway is antifungal biosynthesis. 2-oxoglutarate-dependent dioxygenase; part of the gene cluster that mediates the biosynthesis of echinocandin B, a fungal lipidated cyclic hexapeptide that acts as an antifungal agent. Linoleoyl-AMP, produced by the fatty-acyl-AMP ligase ecdI, is transferred to the initiation carrier domain (T0) of ecdA. The linoleoyl-S-phosphopantetheinyl-T0 is sequentially extended with L-ornithine, L-threonine, L-proline, L-homotyrosine, L-threonine, and 4R-methyl-L-proline to form the linear hexapeptide. Thereafter, the terminal condensation (C7) performs macrocyclization of the NRPS product and the cyclic scaffold is released from ecdA. All six of the amino acid residues are hydroxylated, including 4R,5R-dihydroxy-L-ornithine, 4R-hydroxyl-L-proline, 3S,4S-dihydroxy-L-homotyrosine, and 3S-hydroxyl-4S-methyl-L-prolin. In the pathway, all the hydroxylation reactions are proposed to occur following completion of the cyclic peptide, so the unhydroxylated precursor produced by ecdA will undergo six rounds of hydroxylation. Five hydroxylase genes (ecdG, ecdH, ecdK, htyE and htyF) are embedded within the echinocandin B (ecd) and L-homotyrosine (hty) clusters. This chain is 2-oxoglutarate-dependent dioxygenase ecdK, found in Aspergillus rugulosus (Emericella rugulosa).